Here is a 697-residue protein sequence, read N- to C-terminus: Semaphorin-2A (697 aa).

The N-terminal stretch at M1–S20 is a signal peptide. In terms of domain architecture, Sema spans V21–L493. 2 N-linked (GlcNAc...) asparagine glycosylation sites follow: N63 and N66. C87 and C98 are disulfide-bonded. Residues N132, N198, and N283 are each glycosylated (N-linked (GlcNAc...) asparagine). 2 disulfides stabilise this stretch: C260-C367 and C284-C326. The N-linked (GlcNAc...) asparagine glycan is linked to N369. 2 cysteine pairs are disulfide-bonded: C496/C512 and C506/C521. The region spanning P526 to A634 is the Ig-like C2-type domain. Residues N534, N629, and N679 are each glycosylated (N-linked (GlcNAc...) asparagine). C618 and C654 are joined by a disulfide. Polar residues predominate over residues Q673–T685. The disordered stretch occupies residues Q673–A697.

Belongs to the semaphorin family. As to expression, expressed in a gradient in the developing limb bud epithelium during Ti pioneer axon outgrowth.

The protein localises to the secreted. Functionally, acts as a chemorepulsive guidance molecule critical for axon fasciculation and for determining both the initial direction and subsequent pathfinding events of the Ti axon projection. The protein is Semaphorin-2A (SEMA-2A) of Schistocerca gregaria (Desert locust).